We begin with the raw amino-acid sequence, 403 residues long: Argininosuccinate synthase (403 aa).

Residue 10 to 18 participates in ATP binding; it reads AYSGGLDTS. Y88 and S93 together coordinate L-citrulline. G118 is a binding site for ATP. Positions 120, 124, and 125 each coordinate L-aspartate. N124 is a binding site for L-citrulline. Residues R128, S177, S186, E263, and Y275 each coordinate L-citrulline.

The protein belongs to the argininosuccinate synthase family. Type 1 subfamily. Homotetramer.

The protein localises to the cytoplasm. It carries out the reaction L-citrulline + L-aspartate + ATP = 2-(N(omega)-L-arginino)succinate + AMP + diphosphate + H(+). The protein operates within amino-acid biosynthesis; L-arginine biosynthesis; L-arginine from L-ornithine and carbamoyl phosphate: step 2/3. In Clostridium perfringens (strain ATCC 13124 / DSM 756 / JCM 1290 / NCIMB 6125 / NCTC 8237 / Type A), this protein is Argininosuccinate synthase.